The following is a 143-amino-acid chain: Nucleoside diphosphate kinase (143 aa).

6 residues coordinate ATP: K11, F59, R87, T93, R104, and N114. H117 serves as the catalytic Pros-phosphohistidine intermediate.

It belongs to the NDK family. As to quaternary structure, homotetramer. Mg(2+) serves as cofactor.

It localises to the cytoplasm. The catalysed reaction is a 2'-deoxyribonucleoside 5'-diphosphate + ATP = a 2'-deoxyribonucleoside 5'-triphosphate + ADP. It carries out the reaction a ribonucleoside 5'-diphosphate + ATP = a ribonucleoside 5'-triphosphate + ADP. Its function is as follows. Major role in the synthesis of nucleoside triphosphates other than ATP. The ATP gamma phosphate is transferred to the NDP beta phosphate via a ping-pong mechanism, using a phosphorylated active-site intermediate. This is Nucleoside diphosphate kinase from Clostridium perfringens (strain ATCC 13124 / DSM 756 / JCM 1290 / NCIMB 6125 / NCTC 8237 / Type A).